Reading from the N-terminus, the 224-residue chain is Peptidyl-prolyl cis-trans isomerase FKBP3 (224 aa).

Ala2 carries the N-acetylalanine modification. Ser36 carries the post-translational modification Phosphoserine. Residues 89-102 (KLNEDKPKETKSEE) show a composition bias toward basic and acidic residues. Positions 89 to 111 (KLNEDKPKETKSEETLDEGPPKY) are disordered. Lys99 bears the N6-acetyllysine mark. The 97-residue stretch at 128–224 (GDVVHCWYTG…TFEVELVDID (97 aa)) folds into the PPIase FKBP-type domain. Residue Ser152 is modified to Phosphoserine. N6-acetyllysine is present on Lys170.

The protein belongs to the FKBP-type PPIase family.

The protein localises to the nucleus. The catalysed reaction is [protein]-peptidylproline (omega=180) = [protein]-peptidylproline (omega=0). With respect to regulation, inhibited preferentially by rapamycin over FK506. In terms of biological role, FK506- and rapamycin-binding proteins (FKBPs) constitute a family of receptors for the two immunosuppressants which inhibit T-cell proliferation by arresting two distinct cytoplasmic signal transmission pathways. PPIases accelerate the folding of proteins. This is Peptidyl-prolyl cis-trans isomerase FKBP3 (FKBP3) from Homo sapiens (Human).